The chain runs to 124 residues: MRHRKSGKQLNRNSSHRQAMFANMMVSLFHHERIVTTLPKAKELRRFAEPMITLAKEATVAKRRLAFSRLRDRQAVVKLFDDLGPHYLARPGGYLRIVKYGFRAGDNAPLAIVELVDRQTAAAE.

This sequence belongs to the bacterial ribosomal protein bL17 family. As to quaternary structure, part of the 50S ribosomal subunit. Contacts protein L32.

This is Large ribosomal subunit protein bL17 from Acidithiobacillus ferrooxidans (strain ATCC 23270 / DSM 14882 / CIP 104768 / NCIMB 8455) (Ferrobacillus ferrooxidans (strain ATCC 23270)).